A 136-amino-acid chain; its full sequence is Small ribosomal subunit protein bS6 (136 aa).

The segment covering 97 to 128 has biased composition (basic and acidic residues); it reads EKEQSAMLSRPDRDDFPGKDEERPRPSRRQYE. A disordered region spans residues 97–136; that stretch reads EKEQSAMLSRPDRDDFPGKDEERPRPSRRQYEDVVEGGVE.

It belongs to the bacterial ribosomal protein bS6 family.

Its function is as follows. Binds together with bS18 to 16S ribosomal RNA. This Bartonella bacilliformis (strain ATCC 35685 / KC583 / Herrer 020/F12,63) protein is Small ribosomal subunit protein bS6.